Consider the following 103-residue polypeptide: Pyrimidine/purine nucleoside phosphorylase (103 aa).

The protein belongs to the nucleoside phosphorylase PpnP family.

It catalyses the reaction a purine D-ribonucleoside + phosphate = a purine nucleobase + alpha-D-ribose 1-phosphate. The catalysed reaction is adenosine + phosphate = alpha-D-ribose 1-phosphate + adenine. The enzyme catalyses cytidine + phosphate = cytosine + alpha-D-ribose 1-phosphate. It carries out the reaction guanosine + phosphate = alpha-D-ribose 1-phosphate + guanine. It catalyses the reaction inosine + phosphate = alpha-D-ribose 1-phosphate + hypoxanthine. The catalysed reaction is thymidine + phosphate = 2-deoxy-alpha-D-ribose 1-phosphate + thymine. The enzyme catalyses uridine + phosphate = alpha-D-ribose 1-phosphate + uracil. It carries out the reaction xanthosine + phosphate = alpha-D-ribose 1-phosphate + xanthine. Its function is as follows. Catalyzes the phosphorolysis of diverse nucleosides, yielding D-ribose 1-phosphate and the respective free bases. Can use uridine, adenosine, guanosine, cytidine, thymidine, inosine and xanthosine as substrates. Also catalyzes the reverse reactions. The polypeptide is Pyrimidine/purine nucleoside phosphorylase (Dechloromonas aromatica (strain RCB)).